Consider the following 86-residue polypeptide: UPF0473 protein Clos_1662 (86 aa).

The protein belongs to the UPF0473 family.

This is UPF0473 protein Clos_1662 from Alkaliphilus oremlandii (strain OhILAs) (Clostridium oremlandii (strain OhILAs)).